Here is a 223-residue protein sequence, read N- to C-terminus: Small ribosomal subunit protein uS3 (223 aa).

The KH type-2 domain occupies 39 to 117 (IREHLRKKPS…RPELNAKLVA (79 aa)).

This sequence belongs to the universal ribosomal protein uS3 family. As to quaternary structure, part of the 30S ribosomal subunit. Forms a tight complex with proteins S10 and S14.

Functionally, binds the lower part of the 30S subunit head. Binds mRNA in the 70S ribosome, positioning it for translation. The sequence is that of Small ribosomal subunit protein uS3 from Chlamydia felis (strain Fe/C-56) (Chlamydophila felis).